Consider the following 392-residue polypeptide: Outer membrane protein assembly factor BamB (392 aa).

The signal sequence occupies residues 1–19; sequence MQLRKLLLPGLLSVTLLSG. Cysteine 20 carries the N-palmitoyl cysteine lipid modification. Residue cysteine 20 is the site of S-diacylglycerol cysteine attachment.

The protein belongs to the BamB family. In terms of assembly, part of the Bam complex, which is composed of the outer membrane protein BamA, and four lipoproteins BamB, BamC, BamD and BamE.

It is found in the cell outer membrane. Functionally, part of the outer membrane protein assembly complex, which is involved in assembly and insertion of beta-barrel proteins into the outer membrane. The sequence is that of Outer membrane protein assembly factor BamB from Shigella dysenteriae serotype 1 (strain Sd197).